The following is a 393-amino-acid chain: Na(+)/H(+) antiporter NhaA (393 aa).

11 helical membrane passes run 18-38 (AGGV…NSPW), 65-85 (MLIW…GLEI), 101-121 (MLPA…YAAI), 131-151 (GWGI…VLLG), 160-180 (VFLT…IAFF), 184-204 (NLSP…LGLN), 210-230 (AVGP…KSGI), 260-280 (ALQP…NAGV), 298-318 (IAFG…WLLI), 334-354 (FFGV…IGSL), and 369-389 (IGVL…LLAS).

Belongs to the NhaA Na(+)/H(+) (TC 2.A.33) antiporter family.

Its subcellular location is the cell inner membrane. It carries out the reaction Na(+)(in) + 2 H(+)(out) = Na(+)(out) + 2 H(+)(in). Na(+)/H(+) antiporter that extrudes sodium in exchange for external protons. The polypeptide is Na(+)/H(+) antiporter NhaA (Albidiferax ferrireducens (strain ATCC BAA-621 / DSM 15236 / T118) (Rhodoferax ferrireducens)).